Here is a 453-residue protein sequence, read N- to C-terminus: Validoxylamine A glucosyltransferase (453 aa).

It belongs to the glycosyltransferase 2 family. The cofactor is Mn(2+).

It carries out the reaction validoxylamine A + UDP-alpha-D-glucose = validamycin A + UDP + H(+). Involved in the biosynthesis of the antifungal agent validamycin A. Catalyzes the final attachment of glucose from UDP-alpha-D-glucose to validoxylamine A to yield validamycin A. The protein is Validoxylamine A glucosyltransferase of Streptomyces hygroscopicus subsp. limoneus.